Reading from the N-terminus, the 207-residue chain is Ribosomal RNA large subunit methyltransferase E (207 aa).

S-adenosyl-L-methionine is bound by residues G60, W62, D80, D96, and D121. The active-site Proton acceptor is K161.

It belongs to the class I-like SAM-binding methyltransferase superfamily. RNA methyltransferase RlmE family.

It localises to the cytoplasm. The catalysed reaction is uridine(2552) in 23S rRNA + S-adenosyl-L-methionine = 2'-O-methyluridine(2552) in 23S rRNA + S-adenosyl-L-homocysteine + H(+). Its function is as follows. Specifically methylates the uridine in position 2552 of 23S rRNA at the 2'-O position of the ribose in the fully assembled 50S ribosomal subunit. This is Ribosomal RNA large subunit methyltransferase E from Azotobacter vinelandii (strain DJ / ATCC BAA-1303).